The following is a 567-amino-acid chain: MSDPTRPARIDERSRNVTEGVMRAPNRSMYYAMGYRETDFSKPMVGVASAHSTITPCNSGLQPLADTVVAALKEAGANPQLFGTPTVSDGIGMGTEGMKYSLVSREVIADSIETCVNGLWQDGVVVIGGCDKNMPGGMMALVRTNVPGIYVYGGTIKPGHYQGRDLNIISVFEAVGEFTAGRLDPVDFKEIEKRACPGSGSCGGMYTANTMSAAFEALGMSLPYSSTMANEDAEKLASAAESARVLVEAIKRGLRPRDIVTREAIENAVSVIMATGGSTNAVLHFLAIAHAAEVPWTIDDFECIRRRVPVIVDMKPSGHYLATDLHQAGGIPQVMKLLLEAGLLHGECVTITGRTIAEVLENVPAAPRADQGVIRTLSDPLYAEGHLAILRGNLSPEGCVAKISGLKNPAITGPARVFDSEDDAMGAIMARRIVEGDVVVIRYEGPKGGPGMREMLAPTSALVGQGLGESVGLITDGRFSGGTWGMVVGHVSPEAFVGGPIALVRDGDSVTIDAHRQLVQLNVGDEELARRAADWTPPSPRYTRGVLAKFAKLTSSASKGAVTDLDL.

Cysteine 57 serves as a coordination point for [2Fe-2S] cluster. Residue aspartate 89 participates in Mg(2+) binding. Cysteine 130 contacts [2Fe-2S] cluster. Residues aspartate 131 and lysine 132 each coordinate Mg(2+). The residue at position 132 (lysine 132) is an N6-carboxylysine. Position 202 (cysteine 202) interacts with [2Fe-2S] cluster. Position 454 (glutamate 454) interacts with Mg(2+). Catalysis depends on serine 480, which acts as the Proton acceptor.

It belongs to the IlvD/Edd family. Homodimer. It depends on [2Fe-2S] cluster as a cofactor. Requires Mg(2+) as cofactor.

It catalyses the reaction (2R)-2,3-dihydroxy-3-methylbutanoate = 3-methyl-2-oxobutanoate + H2O. The enzyme catalyses (2R,3R)-2,3-dihydroxy-3-methylpentanoate = (S)-3-methyl-2-oxopentanoate + H2O. It functions in the pathway amino-acid biosynthesis; L-isoleucine biosynthesis; L-isoleucine from 2-oxobutanoate: step 3/4. The protein operates within amino-acid biosynthesis; L-valine biosynthesis; L-valine from pyruvate: step 3/4. In terms of biological role, functions in the biosynthesis of branched-chain amino acids. Catalyzes the dehydration of (2R,3R)-2,3-dihydroxy-3-methylpentanoate (2,3-dihydroxy-3-methylvalerate) into 2-oxo-3-methylpentanoate (2-oxo-3-methylvalerate) and of (2R)-2,3-dihydroxy-3-methylbutanoate (2,3-dihydroxyisovalerate) into 2-oxo-3-methylbutanoate (2-oxoisovalerate), the penultimate precursor to L-isoleucine and L-valine, respectively. The polypeptide is Dihydroxy-acid dehydratase 3 (Aromatoleum aromaticum (strain DSM 19018 / LMG 30748 / EbN1) (Azoarcus sp. (strain EbN1))).